A 195-amino-acid polypeptide reads, in one-letter code: Xanthine phosphoribosyltransferase (195 aa).

The xanthine site is built by L20 and N27. 128–132 serves as a coordination point for 5-phospho-alpha-D-ribose 1-diphosphate; that stretch reads ANGQA. K156 provides a ligand contact to xanthine.

Belongs to the purine/pyrimidine phosphoribosyltransferase family. Xpt subfamily. Homodimer.

The protein resides in the cytoplasm. The enzyme catalyses XMP + diphosphate = xanthine + 5-phospho-alpha-D-ribose 1-diphosphate. It participates in purine metabolism; XMP biosynthesis via salvage pathway; XMP from xanthine: step 1/1. Converts the preformed base xanthine, a product of nucleic acid breakdown, to xanthosine 5'-monophosphate (XMP), so it can be reused for RNA or DNA synthesis. This is Xanthine phosphoribosyltransferase from Latilactobacillus sakei subsp. sakei (strain 23K) (Lactobacillus sakei subsp. sakei).